Consider the following 273-residue polypeptide: (5R)-carbapenem-3-carboxylate synthase (273 aa).

Residues histidine 101 and aspartate 103 each contribute to the Fe cation site. Residue glycine 104 participates in substrate binding. Threonine 130 is a binding site for 2-oxoglutarate. Histidine 251 is a binding site for Fe cation. 2-oxoglutarate is bound by residues arginine 253, arginine 263, and arginine 267.

Belongs to the TfdA dioxygenase family. As to quaternary structure, homohexamer. Dimer of trimers. Requires Fe(2+) as cofactor.

Its subcellular location is the cytoplasm. It catalyses the reaction (3S,5S)-carbapenam-3-caboxylate + 2-oxoglutarate + O2 = (5R)-carbapenem-3-carboxylate + succinate + CO2 + H2O. Inhibited by L-N-acetylproline and by D-N-acetylproline. Functionally, catalyzes the Fe(2+) and alpha-ketoglutarate-dependent conversion of (3S,5S)-carbapenam to (5R)-carbapenem, an essential step in carbapenem antibiotic biosynthesis. This Pectobacterium carotovorum subsp. carotovorum (Erwinia carotovora subsp. carotovora) protein is (5R)-carbapenem-3-carboxylate synthase (carC).